Reading from the N-terminus, the 494-residue chain is Cytochrome P450 monooxygenase acrF (494 aa).

Heme is bound at residue C420.

This sequence belongs to the cytochrome P450 family. Heme serves as cofactor.

Its pathway is secondary metabolite biosynthesis. Functionally, cytochrome P450 monooxygenase; part of the cluster that mediates the biosynthesis of acurin A, a highly reduced polyketide coupled to a serine via a peptide bond. The activities of the highly reducing polyketide synthase acrA and the nonribosomal peptide synthetase acrB are collectively responsible for the synthesis of the acurin A core structure with a heptaketide backbone produced by acrA covalently fused to a L-serine by acrB. After the formation of the PK-NRP hybrid product, it is detached from acrB by reductive release to set up the formation of the lactam ring by aldol condensation. The hydrolyase acrC then catalyzes water loss to generate a double bond in the ring. This double bond is probably reduced, which is followed by three oxidations at C-22 to generate the carboxylic acid moiety, involving probably the FAD-binding monooxygenase acrE and the cytochrome P450 monooxygenases acrD and acrF. Finally, a last methylation step performed by the O-methyltransferase acrG leads to the production of acurin A. The chain is Cytochrome P450 monooxygenase acrF from Aspergillus aculeatus (strain ATCC 16872 / CBS 172.66 / WB 5094).